Reading from the N-terminus, the 404-residue chain is Imidazolonepropionase (404 aa).

2 residues coordinate Fe(3+): His73 and His75. Zn(2+) contacts are provided by His73 and His75. 4-imidazolone-5-propanoate is bound by residues Arg82, Tyr145, and His178. Tyr145 serves as a coordination point for N-formimidoyl-L-glutamate. His243 contributes to the Fe(3+) binding site. His243 is a Zn(2+) binding site. Gln246 is a 4-imidazolone-5-propanoate binding site. Asp318 is a Fe(3+) binding site. Asp318 is a binding site for Zn(2+). N-formimidoyl-L-glutamate contacts are provided by Asn320 and Gly322. Ser323 is a binding site for 4-imidazolone-5-propanoate.

The protein belongs to the metallo-dependent hydrolases superfamily. HutI family. Zn(2+) is required as a cofactor. The cofactor is Fe(3+).

It localises to the cytoplasm. It carries out the reaction 4-imidazolone-5-propanoate + H2O = N-formimidoyl-L-glutamate. It functions in the pathway amino-acid degradation; L-histidine degradation into L-glutamate; N-formimidoyl-L-glutamate from L-histidine: step 3/3. Functionally, catalyzes the hydrolytic cleavage of the carbon-nitrogen bond in imidazolone-5-propanoate to yield N-formimidoyl-L-glutamate. It is the third step in the universal histidine degradation pathway. The sequence is that of Imidazolonepropionase from Bradyrhizobium diazoefficiens (strain JCM 10833 / BCRC 13528 / IAM 13628 / NBRC 14792 / USDA 110).